Here is a 285-residue protein sequence, read N- to C-terminus: MSQTPEARTRDNQTRQIQESVNNVEKHFGELCQIFAGYVRKTARLRDKADLLVREVNTYADTETPTLKHGLKNFADEFAKLQDYRQAEVERLESRVVEPLKSYGGIIKLKREDLKVTLSARNREAKQMAQLEKTRQRNPSDRQIISQAETELQRATMDAARISQQLEETIDNFEKQKIKDIKKLFAEFVTIEMVFHGKALEVLTAAYQHIQDIDEEEDLEVFRNSLHPPDFQSRLDIVRANSRSGSTSRAPSVISQPPGNRQKNRMEDDEDGEDDNDENSTEDEN.

A mitochondrion-targeting transit peptide spans 1–48; the sequence is MSQTPEARTRDNQTRQIQESVNNVEKHFGELCQIFAGYVRKTARLRDK. Positions 11–221 are BAR-like; it reads DNQTRQIQES…DIDEEEDLEV (211 aa). Residues 142 to 184 are a coiled coil; the sequence is RQIISQAETELQRATMDAARISQQLEETIDNFEKQKIKDIKKL. The segment covering 241–261 has biased composition (polar residues); it reads NSRSGSTSRAPSVISQPPGNR. The disordered stretch occupies residues 241-285; it reads NSRSGSTSRAPSVISQPPGNRQKNRMEDDEDGEDDNDENSTEDEN. Positions 267–285 are enriched in acidic residues; sequence EDDEDGEDDNDENSTEDEN.

It belongs to the CIBAR family.

Its subcellular location is the cytoplasm. It localises to the cytoskeleton. It is found in the microtubule organizing center. The protein localises to the centrosome. The protein resides in the centriole. Its subcellular location is the cell projection. It localises to the cilium. It is found in the nucleus. The protein localises to the mitochondrion inner membrane. The protein resides in the flagellum. Plays a critical role in regulating mitochondrial ultrastructure and function by maintaining the integrity of mitochondrial morphology, particularly the organization of cristae. Plays a crucial role in ciliogenesis. Plays a key role in the correct positioning of the annulus, a septin-based ring structure in the sperm flagellum, serving both as a physical barrier and a membrane diffusion barrier that separates the midpiece (MP) from the principal piece (PP). This Xenopus laevis (African clawed frog) protein is CBY1-interacting BAR domain-containing protein 1-B.